Consider the following 317-residue polypeptide: Acetyl-coenzyme A carboxylase carboxyl transferase subunit alpha (317 aa).

One can recognise a CoA carboxyltransferase C-terminal domain in the interval 33 to 294; sequence NLDDEITRLQ…KKRLLADLAD (262 aa).

It belongs to the AccA family. In terms of assembly, acetyl-CoA carboxylase is a heterohexamer composed of biotin carboxyl carrier protein (AccB), biotin carboxylase (AccC) and two subunits each of ACCase subunit alpha (AccA) and ACCase subunit beta (AccD).

It localises to the cytoplasm. It catalyses the reaction N(6)-carboxybiotinyl-L-lysyl-[protein] + acetyl-CoA = N(6)-biotinyl-L-lysyl-[protein] + malonyl-CoA. Its pathway is lipid metabolism; malonyl-CoA biosynthesis; malonyl-CoA from acetyl-CoA: step 1/1. Its function is as follows. Component of the acetyl coenzyme A carboxylase (ACC) complex. First, biotin carboxylase catalyzes the carboxylation of biotin on its carrier protein (BCCP) and then the CO(2) group is transferred by the carboxyltransferase to acetyl-CoA to form malonyl-CoA. In Histophilus somni (strain 129Pt) (Haemophilus somnus), this protein is Acetyl-coenzyme A carboxylase carboxyl transferase subunit alpha.